Reading from the N-terminus, the 206-residue chain is Xanthine phosphoribosyltransferase (206 aa).

Residues Leu28 and Asn35 each coordinate xanthine. 136-140 (ANGQA) contributes to the 5-phospho-alpha-D-ribose 1-diphosphate binding site. Lys164 contacts xanthine.

It belongs to the purine/pyrimidine phosphoribosyltransferase family. Xpt subfamily. As to quaternary structure, homodimer.

Its subcellular location is the cytoplasm. The catalysed reaction is XMP + diphosphate = xanthine + 5-phospho-alpha-D-ribose 1-diphosphate. Its pathway is purine metabolism; XMP biosynthesis via salvage pathway; XMP from xanthine: step 1/1. Converts the preformed base xanthine, a product of nucleic acid breakdown, to xanthosine 5'-monophosphate (XMP), so it can be reused for RNA or DNA synthesis. This Oenococcus oeni (strain ATCC BAA-331 / PSU-1) protein is Xanthine phosphoribosyltransferase.